Here is a 315-residue protein sequence, read N- to C-terminus: N-acetyl-gamma-glutamyl-phosphate reductase (315 aa).

The active site involves C117.

It belongs to the NAGSA dehydrogenase family. Type 2 subfamily.

It localises to the cytoplasm. The catalysed reaction is N-acetyl-L-glutamate 5-semialdehyde + phosphate + NADP(+) = N-acetyl-L-glutamyl 5-phosphate + NADPH + H(+). It functions in the pathway amino-acid biosynthesis; L-arginine biosynthesis; N(2)-acetyl-L-ornithine from L-glutamate: step 3/4. In terms of biological role, catalyzes the NADPH-dependent reduction of N-acetyl-5-glutamyl phosphate to yield N-acetyl-L-glutamate 5-semialdehyde. The polypeptide is N-acetyl-gamma-glutamyl-phosphate reductase (Burkholderia ambifaria (strain ATCC BAA-244 / DSM 16087 / CCUG 44356 / LMG 19182 / AMMD) (Burkholderia cepacia (strain AMMD))).